The chain runs to 409 residues: MWTSWWLWPLVAVCAADQFRDLAVRIMQDTPVIDGHNDLPWQLLNLFNNQLQDPGANLSSLAHTHTNIPKLKAGFVGGQFWSAYVPCDTQNRDAVKRTLEQIDVIQRMCQAYPETFACVTSSTGIRQAFREGKVASLVGVEGGHSIDSSLGVLRALYHLGMRYMTLTHSCNTPWADNWLVDTGDDKAQSQGLSHFGQSVVKEMNRLGVMIDLAHVSVATMRAALKLSQAPVIFSHSSAYSLCPHRRNVPDDVLQLVKETGSLVMVNFYNDYVSCSAKANLSQVADHLDHIKKVAGAAAVGFGGDYDGVSRVPSGLEDVSKYPDLVAELLRRQWTEAEVRGALADNLLRVFEAVEQASNHAQVPGEEPIPLGQLEASCRTNYGYSAAPSLHLPPGSLLASLVPLLLLSLP.

The first 16 residues, 1–16 (MWTSWWLWPLVAVCAA), serve as a signal peptide directing secretion. Zn(2+) is bound by residues histidine 36 and aspartate 38. The N-linked (GlcNAc...) asparagine glycan is linked to asparagine 57. Cysteine 87 and cysteine 170 are disulfide-bonded. Residue glutamate 141 coordinates Zn(2+). Histidine 168 provides a ligand contact to substrate. Positions 214 and 235 each coordinate Zn(2+). Cysteine 242 and cysteine 274 are disulfide-bonded. Arginine 246 contributes to the substrate binding site. Residue asparagine 279 is glycosylated (N-linked (GlcNAc...) asparagine). A substrate-binding site is contributed by aspartate 304. Serine 384 is lipidated: GPI-anchor amidated serine. A propeptide spans 385–409 (AAPSLHLPPGSLLASLVPLLLLSLP) (removed in mature form).

Belongs to the metallo-dependent hydrolases superfamily. Peptidase M19 family. As to quaternary structure, homodimer; disulfide-linked. Zn(2+) is required as a cofactor.

It localises to the apical cell membrane. The protein localises to the cell projection. The protein resides in the microvillus membrane. It is found in the cell membrane. The catalysed reaction is an L-aminoacyl-L-amino acid + H2O = 2 an L-alpha-amino acid. The enzyme catalyses leukotriene D4 + H2O = leukotriene E4 + glycine. It carries out the reaction L-cystine-bis-glycine + 2 H2O = L-cystine + 2 glycine. It catalyses the reaction a beta-lactam + H2O = a substituted beta-amino acid. The catalysed reaction is glycyldehydrophenylalanine + H2O = 2,3-didehydrophenylalanine + glycine. With respect to regulation, inhibited by L-penicillamine. Inhibited by cilastatin. Functionally, hydrolyzes a wide range of dipeptides. Hydrolyzes the conversion of leukotriene D4 to leukotriene E4. Hydrolyzes cystinyl-bis-glycine (cys-bis-gly) formed during glutathione degradation. Also possesses beta lactamase activity and hydrolytically inactivates beta-lactam antibiotics. Its function is as follows. Independently of its dipeptidase activity, acts as an adhesion receptor for neutrophil recruitment from bloodstream into inflamed lungs and liver. In Sus scrofa (Pig), this protein is Dipeptidase 1 (DPEP1).